We begin with the raw amino-acid sequence, 540 residues long: NADH-quinone oxidoreductase subunit N 1 (540 aa).

A run of 13 helical transmembrane segments spans residues 11-31 (ILPE…DVLT), 52-72 (AVGL…LFTV), 109-129 (FTMI…LLAM), 142-162 (ALLI…EFIL), 195-215 (FLFG…TYGF), 250-270 (LILG…VVPF), 284-306 (PVTA…RLLT), 324-344 (WTSI…LAAL), 352-372 (LLAY…LLWA), 386-406 (LIYY…VLAV), 431-451 (LMMT…GFWA), 464-486 (AVPL…LRFL), and 508-528 (AAII…NLIW).

It belongs to the complex I subunit 2 family. In terms of assembly, NDH-1 is composed of 14 different subunits. Subunits NuoA, H, J, K, L, M, N constitute the membrane sector of the complex.

It localises to the cell membrane. The enzyme catalyses a quinone + NADH + 5 H(+)(in) = a quinol + NAD(+) + 4 H(+)(out). NDH-1 shuttles electrons from NADH, via FMN and iron-sulfur (Fe-S) centers, to quinones in the respiratory chain. The immediate electron acceptor for the enzyme in this species is believed to be ubiquinone. Couples the redox reaction to proton translocation (for every two electrons transferred, four hydrogen ions are translocated across the cytoplasmic membrane), and thus conserves the redox energy in a proton gradient. The sequence is that of NADH-quinone oxidoreductase subunit N 1 from Roseiflexus castenholzii (strain DSM 13941 / HLO8).